A 153-amino-acid chain; its full sequence is Superoxide dismutase [Cu-Zn] (153 aa).

3 residues coordinate Cu cation: His-46, His-48, and His-63. A disulfide bridge links Cys-57 with Cys-146. The tract at residues 61-80 (GPHFNPFGKEHGAPEDENRH) is disordered. Zn(2+) contacts are provided by His-63, His-71, His-80, and Asp-83. Residues 68-80 (GKEHGAPEDENRH) show a composition bias toward basic and acidic residues. His-120 contacts Cu cation. The span at 124 to 136 (DDLGRSEHPESKK) shows a compositional bias: basic and acidic residues. Residues 124–143 (DDLGRSEHPESKKTGNAGAR) are disordered. Residue Arg-143 participates in substrate binding.

Belongs to the Cu-Zn superoxide dismutase family. As to quaternary structure, homodimer. The cofactor is Cu cation. Requires Zn(2+) as cofactor.

It localises to the cytoplasm. It carries out the reaction 2 superoxide + 2 H(+) = H2O2 + O2. Destroys radicals which are normally produced within the cells and which are toxic to biological systems. The polypeptide is Superoxide dismutase [Cu-Zn] (sodC) (Aspergillus flavus).